The sequence spans 102 residues: Large ribosomal subunit protein bL21 (102 aa).

Belongs to the bacterial ribosomal protein bL21 family. In terms of assembly, part of the 50S ribosomal subunit. Contacts protein L20.

Its function is as follows. This protein binds to 23S rRNA in the presence of protein L20. This is Large ribosomal subunit protein bL21 from Ehrlichia ruminantium (strain Gardel).